The following is a 203-amino-acid chain: uncharacterized protein (203 aa).

Residues 174–203 (LASSKNPRARSPGLDPLGSSETLWSHRGGH) form a disordered region.

This is an uncharacterized protein from Homo sapiens (Human).